The following is a 176-amino-acid chain: Probable inosine/xanthosine triphosphatase (176 aa).

Aspartate 36 is a Mg(2+) binding site.

This sequence belongs to the YjjX NTPase family. As to quaternary structure, homodimer. Requires Mg(2+) as cofactor. Mn(2+) is required as a cofactor.

It carries out the reaction XTP + H2O = XDP + phosphate + H(+). The catalysed reaction is ITP + H2O = IDP + phosphate + H(+). Functionally, phosphatase that hydrolyzes non-canonical purine nucleotides such as XTP and ITP to their respective diphosphate derivatives. Probably excludes non-canonical purines from DNA/RNA precursor pool, thus preventing their incorporation into DNA/RNA and avoiding chromosomal lesions. The polypeptide is Probable inosine/xanthosine triphosphatase (Saccharolobus islandicus (strain Y.G.57.14 / Yellowstone #1) (Sulfolobus islandicus)).